The sequence spans 966 residues: MKEKMQRMVLSLAMVGFMVFGVASAMNNEGKALMAIKGSFSNLVNMLLDWDDVHNSDLCSWRGVFCDNVSYSVVSLNLSSLNLGGEISPAIGDLRNLQSIDLQGNKLAGQIPDEIGNCASLVYLDLSENLLYGDIPFSISKLKQLETLNLKNNQLTGPVPATLTQIPNLKRLDLAGNHLTGEISRLLYWNEVLQYLGLRGNMLTGTLSSDMCQLTGLWYFDVRGNNLTGTIPESIGNCTSFQILDISYNQITGEIPYNIGFLQVATLSLQGNRLTGRIPEVIGLMQALAVLDLSDNELVGPIPPILGNLSFTGKLYLHGNMLTGPIPSELGNMSRLSYLQLNDNKLVGTIPPELGKLEQLFELNLANNRLVGPIPSNISSCAALNQFNVHGNLLSGSIPLAFRNLGSLTYLNLSSNNFKGKIPVELGHIINLDKLDLSGNNFSGSIPLTLGDLEHLLILNLSRNHLSGQLPAEFGNLRSIQMIDVSFNLLSGVIPTELGQLQNLNSLILNNNKLHGKIPDQLTNCFTLVNLNVSFNNLSGIVPPMKNFSRFAPASFVGNPYLCGNWVGSICGPLPKSRVFSRGALICIVLGVITLLCMIFLAVYKSMQQKKILQGSSKQAEGLTKLVILHMDMAIHTFDDIMRVTENLNEKFIIGYGASSTVYKCALKSSRPIAIKRLYNQYPHNLREFETELETIGSIRHRNIVSLHGYALSPTGNLLFYDYMENGSLWDLLHGSLKKVKLDWETRLKIAVGAAQGLAYLHHDCTPRIIHRDIKSSNILLDENFEAHLSDFGIAKSIPASKTHASTYVLGTIGYIDPEYARTSRINEKSDIYSFGIVLLELLTGKKAVDNEANLHQLILSKADDNTVMEAVDPEVTVTCMDLGHIRKTFQLALLCTKRNPLERPTMLEVSRVLLSLVPSLQVAKKLPSLDHSTKKLQQENEVRNPDAEASQWFVQFREVISKSSI.

Positions 1–25 (MKEKMQRMVLSLAMVGFMVFGVASA) are cleaved as a signal peptide. At 26–582 (MNNEGKALMA…PLPKSRVFSR (557 aa)) the chain is on the extracellular side. One copy of the LRR 1 repeat lies at 40 to 63 (FSNLVNMLLDWDDVHNSDLCSWRG). Residues N68 and N77 are each glycosylated (N-linked (GlcNAc...) asparagine). LRR repeat units follow at residues 75 to 94 (SLNL…IGDL), 95 to 118 (RNLQ…IGNC), 120 to 142 (SLVY…ISKL), 143 to 166 (KQLE…LTQI), 168 to 190 (NLKR…LYWN), 192 to 214 (VLQY…MCQL), 215 to 238 (TGLW…IGNC), 239 to 261 (TSFQ…NIGF), 262 to 285 (LQVA…IGLM), 286 to 311 (QALA…NLSF), 313 to 333 (GKLY…LGNM), 334 to 357 (SRLS…LGKL), 359 to 381 (QLFE…ISSC), 383 to 404 (ALNQ…AFRN), 405 to 429 (LGSL…LGHI), 431 to 453 (NLDK…LGDL), 454 to 476 (EHLL…EFGN), 478 to 500 (RSIQ…ELGQ), 501 to 525 (LQNL…LTNC), and 527 to 550 (TLVN…NFSR). N226 and N237 each carry an N-linked (GlcNAc...) asparagine glycan. N308 and N332 each carry an N-linked (GlcNAc...) asparagine glycan. An N-linked (GlcNAc...) asparagine glycan is attached at N377. N412, N441, and N460 each carry an N-linked (GlcNAc...) asparagine glycan. 3 N-linked (GlcNAc...) asparagine glycosylation sites follow: N532, N537, and N547. The chain crosses the membrane as a helical span at residues 583-603 (GALICIVLGVITLLCMIFLAV). Topologically, residues 604 to 966 (YKSMQQKKIL…FREVISKSSI (363 aa)) are cytoplasmic. A phosphothreonine mark is found at T637 and T645. In terms of domain architecture, Protein kinase spans 648–921 (LNEKFIIGYG…RVLLSLVPSL (274 aa)). ATP contacts are provided by residues 654-662 (IGYGASSTV) and K676. A phosphotyrosine mark is found at Y721 and Y760. Residue D773 is the Proton acceptor of the active site. The residue at position 815 (Y815) is a Phosphotyrosine. Position 823 is a phosphothreonine (T823).

It belongs to the protein kinase superfamily. Ser/Thr protein kinase family. As to quaternary structure, homodimer and heterodimer with ERECTA and TMM. Interacts with EPF1 and EPF2. Interacts with SERK1, SERK2, SERK3/BAK1 and SERK4 in a EPF1-induced manner. As to expression, mostly expressed in developing organs, including bud clusters, flowers, siliques and young rosettes. Also detected in mature aboveground organs, such as leaves, stems and pedicels, but barely in roots.

It localises to the cell membrane. The enzyme catalyses L-seryl-[protein] + ATP = O-phospho-L-seryl-[protein] + ADP + H(+). The catalysed reaction is L-threonyl-[protein] + ATP = O-phospho-L-threonyl-[protein] + ADP + H(+). Receptor kinase that regulates inflorescence architecture and organ shape as well as stomatal patterning, including density and clustering, together with ER and ERL2. Redundantly involved with ER in procambial development regulation. Forms a functional ligand-receptor pair with EPF1 (AC Q8S8I4). Forms a constitutive complex with TMM involved in the recognition of the stomatal regulatory peptides EPF1, EPF2 and EPFL9/STOMAGEN. This is LRR receptor-like serine/threonine-protein kinase ERL1 from Arabidopsis thaliana (Mouse-ear cress).